The sequence spans 773 residues: Serine/threonine-protein kinase CBK1 (773 aa).

Composition is skewed to polar residues over residues 50 to 59 and 178 to 217; these read LHDQYSSHME and GNYN…SPQR. Disordered regions lie at residues 50 to 111 and 177 to 275; these read LHDQ…GGNI and NGNY…QQQQ. Low complexity-rich tracts occupy residues 218-256 and 265-275; these read QPAQ…QQQP and QQTQLQQQQQQ. The region spanning 370–686 is the Protein kinase domain; it reads FHTVQVIGKG…ADEIKSHPFF (317 aa). Residues 376-384 and Lys-399 each bind ATP; that span reads IGKGAFGEV. Asp-493 acts as the Proton acceptor in catalysis. The AGC-kinase C-terminal domain occupies 687–771; that stretch reads RGVDWNTIRQ…SRFDYLTRKN (85 aa).

It belongs to the protein kinase superfamily. STE Ser/Thr protein kinase family. COT1 subfamily.

It carries out the reaction L-seryl-[protein] + ATP = O-phospho-L-seryl-[protein] + ADP + H(+). It catalyses the reaction L-threonyl-[protein] + ATP = O-phospho-L-threonyl-[protein] + ADP + H(+). Its function is as follows. Protein kinase that seems to play a role in the regulation of cell morphogenesis and proliferation. This chain is Serine/threonine-protein kinase CBK1 (CBK1), found in Candida glabrata (strain ATCC 2001 / BCRC 20586 / JCM 3761 / NBRC 0622 / NRRL Y-65 / CBS 138) (Yeast).